Here is an 88-residue protein sequence, read N- to C-terminus: Small ribosomal subunit protein uS15c (88 aa).

Belongs to the universal ribosomal protein uS15 family. As to quaternary structure, part of the 30S ribosomal subunit.

The protein localises to the plastid. Its subcellular location is the chloroplast. The chain is Small ribosomal subunit protein uS15c (rps15) from Physcomitrium patens (Spreading-leaved earth moss).